Here is a 331-residue protein sequence, read N- to C-terminus: Thiamine thiazole synthase (331 aa).

Substrate is bound by residues Ser82, 103–104, Gly111, and Val176; that span reads EA. At Cys210 the chain carries 2,3-didehydroalanine (Cys). Substrate is bound by residues Asp212, His242, Met296, and 306–308; that span reads RMG.

It belongs to the THI4 family. In terms of assembly, homooctamer. The cofactor is Fe cation. During the catalytic reaction, a sulfide is transferred from Cys-210 to a reaction intermediate, generating a dehydroalanine residue.

Its subcellular location is the cytoplasm. It localises to the nucleus. It carries out the reaction [ADP-thiazole synthase]-L-cysteine + glycine + NAD(+) = [ADP-thiazole synthase]-dehydroalanine + ADP-5-ethyl-4-methylthiazole-2-carboxylate + nicotinamide + 3 H2O + 2 H(+). Involved in biosynthesis of the thiamine precursor thiazole. Catalyzes the conversion of NAD and glycine to adenosine diphosphate 5-(2-hydroxyethyl)-4-methylthiazole-2-carboxylic acid (ADT), an adenylated thiazole intermediate. The reaction includes an iron-dependent sulfide transfer from a conserved cysteine residue of the protein to a thiazole intermediate. The enzyme can only undergo a single turnover, which suggests it is a suicide enzyme. May have additional roles in adaptation to various stress conditions and in DNA damage tolerance. This is Thiamine thiazole synthase from Eremothecium gossypii (strain ATCC 10895 / CBS 109.51 / FGSC 9923 / NRRL Y-1056) (Yeast).